The following is a 300-amino-acid chain: Probable alpha-L-glutamate ligase (300 aa).

Residues Leu104–Glu287 form the ATP-grasp domain. ATP is bound by residues Lys141, Glu178 to Tyr179, Asp187, and Arg211 to Asn213. Mg(2+) is bound by residues Asp248, Glu260, and Asn262. Residues Asp248, Glu260, and Asn262 each coordinate Mn(2+).

Belongs to the RimK family. The cofactor is Mg(2+). Mn(2+) is required as a cofactor.

The chain is Probable alpha-L-glutamate ligase from Klebsiella pneumoniae (strain 342).